The sequence spans 506 residues: BTB/POZ domain and ankyrin repeat-containing protein NPR5 (506 aa).

The BTB domain occupies 23-131 (SDVTFSVEGR…LYSGQVSLVP (109 aa)). A C2HC NPR-type zinc finger spans residues 137–151 (RPGCGERGCWHTHCA). Residues C140, C145, H147, and C150 each contribute to the Zn(2+) site. 4 ANK repeats span residues 278–306 (HKIR…GLNL), 307–337 (DDAL…DVNH), 342–371 (AGKT…DPNV), and 375–409 (DGVT…KLRL). A disordered region spans residues 481 to 506 (KMNDGGDGDDGGSRGPSSLFSPHGFP).

It belongs to the plant 'ANKYRIN-BTB/POZ' family. 'NOOT-BOP-COCH-like' (NBCL) subfamily. In terms of assembly, homodimer. Interacts with TGAL5, TGAL7, TGAL8 and TGAL11.

The protein resides in the nucleus. Its subcellular location is the cytoplasm. It participates in protein modification; protein ubiquitination. Its function is as follows. May act as a substrate-specific adapter of an E3 ubiquitin-protein ligase complex (CUL3-RBX1-BTB) which mediates the ubiquitination and subsequent proteasomal degradation of target proteins. Transcriptional co-regulator involved in the promotion of leaf and floral meristem fate and determinacy. Required for the abscission of senescent organs, probably by regulating the cell wall disorganization in abscission zones (AZs, e.g. pulvini at the base of leaves). Maybe involved in defense response against pathogens. This Oryza sativa subsp. japonica (Rice) protein is BTB/POZ domain and ankyrin repeat-containing protein NPR5.